The sequence spans 666 residues: Endogenous retrovirus group K member 21 Gag polyprotein (666 aa).

A lipid anchor (N-myristoyl glycine) is attached at glycine 2. 2 disordered regions span residues 165–189 and 217–264; these read GKGP…AGQV and ELQY…GSEL. The span at 232 to 247 shows a compositional bias: pro residues; sequence GMPPAPQGRAPYPQPP. 2 CCHC-type zinc fingers span residues 544–561 and 580–597; these read GKCY…NCPV and DLCP…QCRS. Residues 598-641 are disordered; it reads KFDKNGQPLSGNEQRGQPQAPQQTGAFPIQPFVPQGFQGQQPPL. Residues 604–622 are compositionally biased toward polar residues; that stretch reads QPLSGNEQRGQPQAPQQTG. Residues 624-640 show a composition bias toward low complexity; it reads FPIQPFVPQGFQGQQPP.

It belongs to the beta type-B retroviral Gag protein family. HERV class-II K(HML-2) gag subfamily. In terms of processing, myristoylation is essential for retroviral assembly. Alteration of the glycine residue leads to a block in the budding of particles and an accumulation of Gag inside the cell. Post-translationally, specific enzymatic cleavages may yield mature proteins.

The protein resides in the cell membrane. Functionally, the products of the Gag polyproteins of infectious retroviruses perform highly complex orchestrated tasks during the assembly, budding, maturation, and infection stages of the viral replication cycle. During viral assembly, the proteins form membrane associations and self-associations that ultimately result in budding of an immature virion from the infected cell. Gag precursors also function during viral assembly to selectively bind and package two plus strands of genomic RNA. Endogenous Gag proteins may have kept, lost or modified their original function during evolution. In Homo sapiens (Human), this protein is Endogenous retrovirus group K member 21 Gag polyprotein (ERVK-21).